Consider the following 399-residue polypeptide: MDSQRPEPREEEEEEQELRWMELDSEEALGTRTEGPSVVQGWGHLLQAVWRGPAGLVTQLLRQGASVEERDHAGRTPLHLAVLRGHAPLVRLLLQRGAPVGAVDRAGRTALHEAAWHGHSRVAELLLQRGASAAARSGTGLTPLHWAAALGHTLLAARLLEAPGPGPAAAEAEDARGWTAAHWAAAGGRLAVLELLAAGGAGLDGALLVAAAAGRGAALRFLLARGARVDARDGAGATALGLAAALGRSQDIEVLLGHGADPGIRDRHGRSALHRAAARGHLLAVQLLVTQGAEVDARDTLGLTPLHHASREGHVEVAGCLLDRGAQVDATGWLRKTPLHLAAERGHGPTVGLLLSRGASPTLRTQWAEVAQMPEGDLPQALPELGGGEKECEGIESTG.

ANK repeat units follow at residues 40 to 69 (QGWGHLLQAVWRGPAGLVTQLLRQGASVEE), 73 to 102 (AGRTPLHLAVLRGHAPLVRLLLQRGAPVGA), 106 to 135 (AGRTALHEAAWHGHSRVAELLLQRGASAAA), 139 to 168 (TGLTPLHWAAALGHTLLAARLLEAPGPGPA), 176 to 205 (RGWTAAHWAAAGGRLAVLELLAAGGAGLDG), 207 to 231 (LLVAAAAGRGAALRFLLARGARVDA), 235 to 264 (AGATALGLAAALGRSQDIEVLLGHGADPGI), 268 to 297 (HGRSALHRAAARGHLLAVQLLVTQGAEVDA), 301 to 330 (LGLTPLHHASREGHVEVAGCLLDRGAQVDA), and 334 to 363 (LRKTPLHLAAERGHGPTVGLLLSRGASPTL). Positions 377–399 (DLPQALPELGGGEKECEGIESTG) are disordered.

This Homo sapiens (Human) protein is Ankyrin repeat domain-containing protein 65 (ANKRD65).